Consider the following 345-residue polypeptide: Heat-inducible transcription repressor HrcA (345 aa).

This sequence belongs to the HrcA family.

Negative regulator of class I heat shock genes (grpE-dnaK-dnaJ and groELS operons). Prevents heat-shock induction of these operons. In Tetragenococcus halophilus (Pediococcus halophilus), this protein is Heat-inducible transcription repressor HrcA.